Consider the following 364-residue polypeptide: tRNA 2-selenouridine synthase (364 aa).

The Rhodanese domain occupies 14 to 137; that stretch reads LLADTPLIDV…LRQTAIQATW (124 aa). Residue Cys-97 is the S-selanylcysteine intermediate of the active site.

Belongs to the SelU family. In terms of assembly, monomer.

The catalysed reaction is 5-methylaminomethyl-2-thiouridine(34) in tRNA + selenophosphate + (2E)-geranyl diphosphate + H2O + H(+) = 5-methylaminomethyl-2-selenouridine(34) in tRNA + (2E)-thiogeraniol + phosphate + diphosphate. The enzyme catalyses 5-methylaminomethyl-2-thiouridine(34) in tRNA + (2E)-geranyl diphosphate = 5-methylaminomethyl-S-(2E)-geranyl-thiouridine(34) in tRNA + diphosphate. It catalyses the reaction 5-methylaminomethyl-S-(2E)-geranyl-thiouridine(34) in tRNA + selenophosphate + H(+) = 5-methylaminomethyl-2-(Se-phospho)selenouridine(34) in tRNA + (2E)-thiogeraniol. It carries out the reaction 5-methylaminomethyl-2-(Se-phospho)selenouridine(34) in tRNA + H2O = 5-methylaminomethyl-2-selenouridine(34) in tRNA + phosphate. Functionally, involved in the post-transcriptional modification of the uridine at the wobble position (U34) of tRNA(Lys), tRNA(Glu) and tRNA(Gln). Catalyzes the conversion of 2-thiouridine (S2U-RNA) to 2-selenouridine (Se2U-RNA). Acts in a two-step process involving geranylation of 2-thiouridine (S2U) to S-geranyl-2-thiouridine (geS2U) and subsequent selenation of the latter derivative to 2-selenouridine (Se2U) in the tRNA chain. The sequence is that of tRNA 2-selenouridine synthase from Salmonella agona (strain SL483).